The sequence spans 186 residues: Biofilm operon icaADBC HTH-type negative transcriptional regulator IcaR (186 aa).

The 59-residue stretch at 1-59 (MKDKIIDNAITLFSEKGYDGTTLDDIAKSVNIKKASLYYHFDSKKSIYEQSVKCCFDYL) folds into the HTH tetR-type domain. A DNA-binding region (H-T-H motif) is located at residues 22–41 (TLDDIAKSVNIKKASLYYHF).

As to quaternary structure, homodimer.

Its function is as follows. Represses transcription of the icaADBC operon necessary for biofilm production. The protein is Biofilm operon icaADBC HTH-type negative transcriptional regulator IcaR (icaR) of Staphylococcus aureus (strain NCTC 8325 / PS 47).